The sequence spans 114 residues: Lymphotactin (114 aa).

The signal sequence occupies residues 1-21 (MRLLLLTFLGVCCFAAWVVEG). C32 and C69 are oxidised to a cystine. Residues 87–114 (RASASKSKAETIPTQAQRSASTAVTLTG) form a disordered region. Residues 98–114 (IPTQAQRSASTAVTLTG) are compositionally biased toward polar residues.

Belongs to the intercrine gamma family.

The protein resides in the secreted. In terms of biological role, chemotactic activity for lymphocytes but not for monocytes or neutrophils. In thymus, mediates medullary accumulation of thymic dendritic cells and contributes to regulatoy T cell development, playing a role in self-tolerance establishment. In Rattus norvegicus (Rat), this protein is Lymphotactin (Xcl1).